A 333-amino-acid polypeptide reads, in one-letter code: MVREGEEHIDEEFSLGVIGVSYRETALQQREQVLQFLQQAQLSFYPKFPQEEGRSVLLSTCHRVELYGMATEAIFSTLEKEIREMGAIPYFYRNQDCFSHLFCVVGGMDSLVLGETEIQGQVKRAYLQAIEEQKLAFALHFLFQKALKEGKVFRTKRSSPSTEITIPAFVQHELQKQKMARSASLLFMGYSEINRSVAYYLQKQGFSRITFCSRQPLSLRSMDQVLREEVCFQDPYHVIFLGSSELRHAFPRSLWEGVWDFPGRLVFDFAVPRALPVQPACRDRYIDMEQISDWLRQHQKEVFPLQLDSLREVGYRYWESLNRRLARRRYASV.

Substrate is bound by residues 60-63, Ser-110, 115-117, and Gln-121; these read TCHR and ETE. The Nucleophile role is filled by Cys-61. 189-194 contacts NADP(+); the sequence is GYSEIN.

Belongs to the glutamyl-tRNA reductase family. Homodimer.

It catalyses the reaction (S)-4-amino-5-oxopentanoate + tRNA(Glu) + NADP(+) = L-glutamyl-tRNA(Glu) + NADPH + H(+). It participates in porphyrin-containing compound metabolism; protoporphyrin-IX biosynthesis; 5-aminolevulinate from L-glutamyl-tRNA(Glu): step 1/2. Catalyzes the NADPH-dependent reduction of glutamyl-tRNA(Glu) to glutamate 1-semialdehyde (GSA). In Chlamydia muridarum (strain MoPn / Nigg), this protein is Glutamyl-tRNA reductase.